The chain runs to 343 residues: Allergin-1 (343 aa).

An N-terminal signal peptide occupies residues 1–19; it reads MWSHLNRLLFWSIFSSVTC. At 20–227 the chain is on the extracellular side; the sequence is RKAVLDCEAM…GGDSCPFCLK (208 aa). Ig-like C2-type domains follow at residues 35–118 and 128–213; these read PSPC…RDFS and PVLN…HPVT. N-linked (GlcNAc...) asparagine glycans are attached at residues Asn-51, Asn-60, Asn-89, Asn-151, Asn-157, and Asn-182. 2 disulfides stabilise this stretch: Cys-56/Cys-103 and Cys-147/Cys-196. The chain crosses the membrane as a helical span at residues 228–248; it reads LLLPGLLLLLVVIILILAFWV. The Cytoplasmic segment spans residues 249–343; it reads LPKYKTRKAM…SGYVYSELNF (95 aa). 2 consecutive short sequence motifs (ITIM motif) follow at residues 311 to 316 and 336 to 341; these read LQYATP and YVYSEL. 2 positions are modified to phosphotyrosine: Tyr-313 and Tyr-338.

Monomer. Interacts (tyrosine-phosphorylated) with PTPN6, PTPN11 and INPP5D. Post-translationally, N-glycosylated. As to expression, expressed in myeloid cells (dendritic cells, macrophages and neutrophils, weak expression on B-cells but not in T-cells or natural killer cells), peripheral blood basophils and mast cells (at protein level).

The protein localises to the cell membrane. Its function is as follows. Immunoglobulin-like receptor which plays an inhibitory role in degranulation of mast cells. Negatively regulates IgE-mediated mast cell activation and suppresses the type I immediate hypersensitivity reaction. This is Allergin-1 (MILR1) from Homo sapiens (Human).